Consider the following 454-residue polypeptide: Protein odr-4 homolog (454 aa).

The next 2 helical transmembrane spans lie at 82-102 and 432-452; these read MLPG…ELAN and IGVI…FHYF.

The protein belongs to the ODR-4 family.

The protein localises to the membrane. Functionally, may play a role in the trafficking of a subset of G-protein coupled receptors. The chain is Protein odr-4 homolog (ODR4) from Pongo abelii (Sumatran orangutan).